The following is a 465-amino-acid chain: ATP synthase subunit beta (465 aa).

153–160 lines the ATP pocket; it reads GGAGVGKT.

It belongs to the ATPase alpha/beta chains family. As to quaternary structure, F-type ATPases have 2 components, CF(1) - the catalytic core - and CF(0) - the membrane proton channel. CF(1) has five subunits: alpha(3), beta(3), gamma(1), delta(1), epsilon(1). CF(0) has three main subunits: a(1), b(2) and c(9-12). The alpha and beta chains form an alternating ring which encloses part of the gamma chain. CF(1) is attached to CF(0) by a central stalk formed by the gamma and epsilon chains, while a peripheral stalk is formed by the delta and b chains.

The protein localises to the cell membrane. The catalysed reaction is ATP + H2O + 4 H(+)(in) = ADP + phosphate + 5 H(+)(out). Its function is as follows. Produces ATP from ADP in the presence of a proton gradient across the membrane. The catalytic sites are hosted primarily by the beta subunits. The chain is ATP synthase subunit beta from Clostridium perfringens (strain SM101 / Type A).